A 254-amino-acid polypeptide reads, in one-letter code: 14-3-3 protein 2 (254 aa).

It belongs to the 14-3-3 family. Homodimer.

The sequence is that of 14-3-3 protein 2 (TFT2) from Solanum lycopersicum (Tomato).